The primary structure comprises 677 residues: UvrABC system protein B (677 aa).

Residues 27–414 (ANLGHGVRDQ…SQGVIAEQII (388 aa)) form the Helicase ATP-binding domain. 40 to 47 (GVTGSGKT) provides a ligand contact to ATP. Positions 93 to 116 (YYDYYQPEAYVPASDTYIEKDSSI) match the Beta-hairpin motif. Residues 432–594 (QVDDLLAECR…IEPRTIRKSL (163 aa)) form the Helicase C-terminal domain. In terms of domain architecture, UVR spans 638 to 673 (AKHIQKLEREMREAAKELEFERAATLRDRIRLLRER).

Belongs to the UvrB family. Forms a heterotetramer with UvrA during the search for lesions. Interacts with UvrC in an incision complex.

It localises to the cytoplasm. The UvrABC repair system catalyzes the recognition and processing of DNA lesions. A damage recognition complex composed of 2 UvrA and 2 UvrB subunits scans DNA for abnormalities. Upon binding of the UvrA(2)B(2) complex to a putative damaged site, the DNA wraps around one UvrB monomer. DNA wrap is dependent on ATP binding by UvrB and probably causes local melting of the DNA helix, facilitating insertion of UvrB beta-hairpin between the DNA strands. Then UvrB probes one DNA strand for the presence of a lesion. If a lesion is found the UvrA subunits dissociate and the UvrB-DNA preincision complex is formed. This complex is subsequently bound by UvrC and the second UvrB is released. If no lesion is found, the DNA wraps around the other UvrB subunit that will check the other stand for damage. The chain is UvrABC system protein B from Nitratidesulfovibrio vulgaris (strain ATCC 29579 / DSM 644 / CCUG 34227 / NCIMB 8303 / VKM B-1760 / Hildenborough) (Desulfovibrio vulgaris).